Here is a 264-residue protein sequence, read N- to C-terminus: Undecaprenyl-diphosphatase (264 aa).

A run of 8 helical transmembrane segments spans residues 1 to 21 (MDIV…FLPI), 39 to 59 (QGLA…VFYF), 83 to 103 (STLV…GLAF), 113 to 133 (SGIV…LADK), 143 to 163 (VTIK…IPGV), 181 to 201 (VGSA…AGGL), 220 to 240 (LAAL…MSII), and 244 to 264 (SMTP…FIFV).

The protein belongs to the UppP family.

The protein localises to the cell inner membrane. It carries out the reaction di-trans,octa-cis-undecaprenyl diphosphate + H2O = di-trans,octa-cis-undecaprenyl phosphate + phosphate + H(+). In terms of biological role, catalyzes the dephosphorylation of undecaprenyl diphosphate (UPP). Confers resistance to bacitracin. The sequence is that of Undecaprenyl-diphosphatase from Campylobacter curvus (strain 525.92).